Consider the following 170-residue polypeptide: Cytidine diphosphoramidate kinase (170 aa).

This sequence belongs to the APS kinase family.

The catalysed reaction is cytidine 5'-diphosphoramidate + ATP = cytidine 3'-phospho-5'-diphosphoramidate + ADP + H(+). It functions in the pathway capsule biogenesis; capsule polysaccharide biosynthesis. Its function is as follows. Involved in the biosynthesis of the O-methyl phosphoramidate (MeOPN) group found on the capsular polysaccharide (CPS) of C.jejuni. Catalyzes the ATP-dependent phosphorylation of cytidine diphosphoramidate (CDP-NH(2)) to form cytidine 3'-phosphate 5'-diphosphoramidate. Can also use other substrates such as the corresponding adenine and uridine diphosphoramidate derivatives or cytidine diphosphoramidate analogs, with lower efficiency. The chain is Cytidine diphosphoramidate kinase from Campylobacter jejuni subsp. jejuni serotype O:2 (strain ATCC 700819 / NCTC 11168).